Reading from the N-terminus, the 249-residue chain is NADH dehydrogenase [ubiquinone] flavoprotein 2, mitochondrial (249 aa).

The transit peptide at 1-32 directs the protein to the mitochondrion; that stretch reads MFFSAALRARAAGLTAHWGRHVRNLHKTAKQN. K61 carries the N6-acetyllysine modification. The [2Fe-2S] cluster site is built by C135, C140, C176, and C180. At Y193 the chain carries Phosphotyrosine; by SRC. The disordered stretch occupies residues 213–249; the sequence is IPKPGPRSGRFSCEPAGGLTSLTEPPKGPGFGVQAGL.

Belongs to the complex I 24 kDa subunit family. Core subunit of respiratory chain NADH dehydrogenase (Complex I) which is composed of 45 different subunits. This is a component of the flavoprotein-sulfur (FP) fragment of the enzyme. [2Fe-2S] cluster is required as a cofactor.

Its subcellular location is the mitochondrion inner membrane. The enzyme catalyses a ubiquinone + NADH + 5 H(+)(in) = a ubiquinol + NAD(+) + 4 H(+)(out). Functionally, core subunit of the mitochondrial membrane respiratory chain NADH dehydrogenase (Complex I) which catalyzes electron transfer from NADH through the respiratory chain, using ubiquinone as an electron acceptor. Parts of the peripheral arm of the enzyme, where the electrons from NADH are accepted by flavin mononucleotide (FMN) and then passed along a chain of iron-sulfur clusters by electron tunnelling to the final acceptor ubiquinone. Contains one iron-sulfur cluster. This is NADH dehydrogenase [ubiquinone] flavoprotein 2, mitochondrial from Pan troglodytes (Chimpanzee).